The chain runs to 154 residues: 6,7-dimethyl-8-ribityllumazine synthase (154 aa).

Residues Trp-23, 57-59 (AFE), and 81-83 (AVI) contribute to the 5-amino-6-(D-ribitylamino)uracil site. Residue 86–87 (AT) participates in (2S)-2-hydroxy-3-oxobutyl phosphate binding. Catalysis depends on His-89, which acts as the Proton donor. 5-amino-6-(D-ribitylamino)uracil is bound at residue Phe-114. Arg-128 is a binding site for (2S)-2-hydroxy-3-oxobutyl phosphate.

This sequence belongs to the DMRL synthase family.

The enzyme catalyses (2S)-2-hydroxy-3-oxobutyl phosphate + 5-amino-6-(D-ribitylamino)uracil = 6,7-dimethyl-8-(1-D-ribityl)lumazine + phosphate + 2 H2O + H(+). The protein operates within cofactor biosynthesis; riboflavin biosynthesis; riboflavin from 2-hydroxy-3-oxobutyl phosphate and 5-amino-6-(D-ribitylamino)uracil: step 1/2. Functionally, catalyzes the formation of 6,7-dimethyl-8-ribityllumazine by condensation of 5-amino-6-(D-ribitylamino)uracil with 3,4-dihydroxy-2-butanone 4-phosphate. This is the penultimate step in the biosynthesis of riboflavin. This Sulfurimonas denitrificans (strain ATCC 33889 / DSM 1251) (Thiomicrospira denitrificans (strain ATCC 33889 / DSM 1251)) protein is 6,7-dimethyl-8-ribityllumazine synthase.